A 218-amino-acid polypeptide reads, in one-letter code: Tegument protein UL51 homolog (218 aa).

C11 carries S-palmitoyl cysteine; by host lipidation. A disordered region spans residues 199–218; sequence APPPVVRQPEHSGPTELALT.

The protein belongs to the herpesviridae UL51 family. In terms of assembly, homodimer. Interacts with BBRF2; the BBRF2-BSRF1 complexes oligomerize which might play a role in tethering the viral nucleocapsids to the host Golgi membrane during secondary envelopment. Interacts with BGLF3.5. Interacts with BALF1. Interacts with glycoprotein gB. Interacts with glycoprotein heterodimer gH/gL. Phosphorylated. Post-translationally, palmitoylation is necessary for Golgi localization.

Its subcellular location is the host cytoplasm. The protein resides in the virion. It localises to the host Golgi apparatus. Its function is as follows. Plays several roles during the time course of infection, including egress of virus particles from the perinuclear space and secondary envelopment of cytoplasmic capsids that bud into specific trans-Golgi network (TGN)-derived membranes. The sequence is that of Tegument protein UL51 homolog from Homo sapiens (Human).